The chain runs to 594 residues: Kelch domain-containing protein 7B (594 aa).

The tract at residues 1–174 (MVLRSHPFPR…PAGRSGALTE (174 aa)) is disordered. Over residues 49-58 (IGTGTGGLVE) the composition is skewed to gly residues. Positions 64 to 74 (QPRSSETNGSP) are enriched in polar residues. The span at 104–115 (PAQPPAQRPPGP) shows a compositional bias: pro residues. Positions 116–126 (AASSSARRSQP) are enriched in low complexity. Kelch repeat units lie at residues 306 to 354 (EEPP…TMHN), 355 to 405 (YLFL…ALDG), 406 to 448 (LLYA…AVAC), 451 to 493 (DIYV…ALGG), and 495 to 538 (LYRF…TTLG).

This chain is Kelch domain-containing protein 7B (KLHDC7B), found in Homo sapiens (Human).